Consider the following 478-residue polypeptide: Methionine aminopeptidase 2 (478 aa).

The interval 1 to 122 (MAGVEEVAAS…TDPPSVPICD (122 aa)) is disordered. N-acetylalanine is present on alanine 2. Basic residues predominate over residues 36–46 (KKKRRKKKKSK). Phosphoserine is present on serine 45. Positions 55-79 (EPDKESGASVDEVARQLERSALEDK) are enriched in basic and acidic residues. 2 positions are modified to phosphoserine; alternate: serine 60 and serine 63. O-linked (GlcNAc) serine; alternate glycosylation is found at serine 60 and serine 63. Position 74 is a phosphoserine (serine 74). Residues 80-92 (ERDEDDEDGDGDG) are compositionally biased toward acidic residues. Residues 97-109 (GKKKKKKKKKRGP) are compositionally biased toward basic residues. Histidine 231 is a substrate binding site. The a divalent metal cation site is built by aspartate 251, aspartate 262, and histidine 331. Histidine 339 lines the substrate pocket. A divalent metal cation contacts are provided by glutamate 364 and glutamate 459.

This sequence belongs to the peptidase M24A family. Methionine aminopeptidase eukaryotic type 2 subfamily. In terms of assembly, interacts strongly with the eIF-2 gamma-subunit EIF2S3. Binds EIF2S1 at low magnesium concentrations. Co(2+) serves as cofactor. Zn(2+) is required as a cofactor. The cofactor is Mn(2+). Requires Fe(2+) as cofactor. In terms of processing, contains approximately 12 O-linked N-acetylglucosamine (GlcNAc) residues. O-glycosylation is required for EIF2S1 binding.

The protein resides in the cytoplasm. The enzyme catalyses Release of N-terminal amino acids, preferentially methionine, from peptides and arylamides.. Cotranslationally removes the N-terminal methionine from nascent proteins. The N-terminal methionine is often cleaved when the second residue in the primary sequence is small and uncharged (Met-Ala-, Cys, Gly, Pro, Ser, Thr, or Val). The catalytic activity of human METAP2 toward Met-Val peptides is consistently two orders of magnitude higher than that of METAP1, suggesting that it is responsible for processing proteins containing N-terminal Met-Val and Met-Thr sequences in vivo. Functionally, protects eukaryotic initiation factor EIF2S1 from translation-inhibiting phosphorylation by inhibitory kinases such as EIF2AK2/PKR and EIF2AK1/HCR. Plays a critical role in the regulation of protein synthesis. In Homo sapiens (Human), this protein is Methionine aminopeptidase 2.